The following is a 390-amino-acid chain: Matrix metalloproteinase-23 (390 aa).

At 1 to 19 (MGRGARVPSEAPGAGVERR) the chain is on the cytoplasmic side. Residues 1-78 (MGRGARVPSE…PGPLAPRRRR (78 aa)) constitute a propeptide that is removed on maturation. The chain crosses the membrane as a helical; Signal-anchor for type II membrane protein span at residues 20 to 40 (WLGAALVALCLLPALVLLARL). The Lumenal segment spans residues 41-390 (GAPAVPAWSA…TYSWRVRVRG (350 aa)). Asn92 and Asn148 each carry an N-linked (GlcNAc...) asparagine glycan. Zn(2+) is bound at residue His211. The active site involves Glu212. 2 residues coordinate Zn(2+): His215 and His221. N-linked (GlcNAc...) asparagine glycosylation is present at Asn232. The region spanning 255-289 (CLDRLFVCASWARRGFCDARRRLMKRLCPSSCDFC) is the ShKT domain. 3 disulfides stabilise this stretch: Cys255–Cys289, Cys262–Cys282, and Cys271–Cys286. In terms of domain architecture, Ig-like C2-type spans 295 to 380 (PTVATTPPPP…VVRRQQRVLT (86 aa)). An N-linked (GlcNAc...) asparagine glycan is attached at Asn316. A disulfide bond links Cys321 and Cys370.

It belongs to the peptidase M10A family. Requires Zn(2+) as cofactor. N-glycosylated. In terms of processing, proteolytic cleavage might yield an active form. Predominantly expressed in ovary, testis and prostate.

Its subcellular location is the endoplasmic reticulum membrane. The protein localises to the membrane. Inhibited by TIMP2. In terms of biological role, protease. May regulate the surface expression of some potassium channels by retaining them in the endoplasmic reticulum. The protein is Matrix metalloproteinase-23 (MMP23B) of Homo sapiens (Human).